The primary structure comprises 493 residues: Monocarboxylate transporter 1 (493 aa).

The Cytoplasmic portion of the chain corresponds to 1–22 (MPPAIGGPVGYTPPDGGWGWAV). Residues 23 to 44 (LVGAFISIGFSYAFPKSITVFF) traverse the membrane as a helical segment. Lys-38 contacts (S)-lactate. Over 45 to 55 (KEIEVIFSATT) the chain is Extracellular. The helical transmembrane segment at 56-80 (SEVSWISSIMLAVMYAGGPISSILV) threads the bilayer. At 81 to 84 (NKYG) the chain is on the cytoplasmic side. A helical membrane pass occupies residues 85-105 (SRPVMIAGGCLSGCGLIAASF). The Extracellular portion of the chain corresponds to 106 to 109 (CNTV). A helical transmembrane segment spans residues 110 to 132 (QELYLCIGVIGGLGLAFNLNPAL). Residues 133 to 146 (TMIGKYFYKKRPLA) lie on the Cytoplasmic side of the membrane. The helical transmembrane segment at 147–169 (NGLAMAGSPVFLSTLAPLNQAFF) threads the bilayer. The Extracellular segment spans residues 170–174 (DIFDW). Residues 175–194 (RGSFLILGGLLLNCCVAGSL) form a helical membrane-spanning segment. Over 195 to 254 (MRPIGPEQVKLEKLKSKESLQEAGKSDANTDLIGGSPKGEKLSVFQTINKFLDLSLFTHR) the chain is Cytoplasmic. Residues Ser-210, Ser-213, and Ser-220 each carry the phosphoserine modification. Phosphothreonine is present on Thr-224. Ser-230 is modified (phosphoserine). A helical transmembrane segment spans residues 255-281 (GFLLYLSGNVVMFFGLFTPLVFLSSYG). Over 282–288 (KSKDFSS) the chain is Extracellular. Residues 289–310 (EKSAFLLSILAFVDMVARPSMG) traverse the membrane as a helical segment. Asp-302 contacts H(+). Arg-306 contacts (S)-lactate. At 311 to 321 (LAANTKWIRPR) the chain is on the cytoplasmic side. The helical transmembrane segment at 322-342 (IQYFFAASVVANGVCHLLAPL) threads the bilayer. The Extracellular portion of the chain corresponds to 343 to 346 (STTY). Residues 347 to 368 (VGFCVYAGVFGFAFGWLSSVLF) traverse the membrane as a helical segment. The Cytoplasmic segment spans residues 369–382 (ETLMDLIGPQRFSS). Residues 383–403 (AVGLVTIVECCPVLLGPPLLG) form a helical membrane-spanning segment. Residues 404-414 (RLNDMYGDYKY) are Extracellular-facing. A helical membrane pass occupies residues 415–436 (TYWACGVILIIAGIYLFIGMGI). At 437-493 (NYRLLAKEQKAEEKQKREGKEDEASTDVDEKPKETMKAAQSPQQHSSGDPTEEESPV) the chain is on the cytoplasmic side. The segment covering 447–472 (AEEKQKREGKEDEASTDVDEKPKETM) has biased composition (basic and acidic residues). The segment at 447–493 (AEEKQKREGKEDEASTDVDEKPKETMKAAQSPQQHSSGDPTEEESPV) is disordered. Phosphoserine is present on Ser-461. Position 462 is a phosphothreonine (Thr-462). Over residues 474 to 485 (AAQSPQQHSSGD) the composition is skewed to polar residues. Phosphoserine occurs at positions 477, 482, 483, and 491.

This sequence belongs to the major facilitator superfamily. Monocarboxylate porter (TC 2.A.1.13) family. As to quaternary structure, interacts with isoform 2 of BSG; interaction mediates SLC16A1 targeting to the plasma membrane. Interacts with EMB; interaction mediates SLC16A1 targeting to the plasma membrane. In terms of tissue distribution, detected in liver, brain, spinal cord, spermatozoa, muscle, white adipose tissue and brown adipose tissue (at protein level). Widely expressed, except in pancreas, where expression is not detectable.

It is found in the cell membrane. The protein resides in the basolateral cell membrane. Its subcellular location is the apical cell membrane. The catalysed reaction is (S)-lactate(in) + H(+)(in) = (S)-lactate(out) + H(+)(out). The enzyme catalyses acetate(out) + H(+)(out) = acetate(in) + H(+)(in). It carries out the reaction acetoacetate(out) + H(+)(out) = acetoacetate(in) + H(+)(in). It catalyses the reaction pyruvate(out) + H(+)(out) = pyruvate(in) + H(+)(in). The catalysed reaction is (R)-3-hydroxybutanoate(out) + H(+)(out) = (R)-3-hydroxybutanoate(in) + H(+)(in). The enzyme catalyses 3-methyl-2-oxobutanoate(out) + H(+)(out) = 3-methyl-2-oxobutanoate(in) + H(+)(in). It carries out the reaction 4-methyl-2-oxopentanoate(out) + H(+)(out) = 4-methyl-2-oxopentanoate(in) + H(+)(in). It catalyses the reaction succinate(in) + 2 H(+)(in) = succinate(out) + 2 H(+)(out). In terms of biological role, bidirectional proton-coupled monocarboxylate transporter. Catalyzes the rapid transport across the plasma membrane of many monocarboxylates such as lactate, pyruvate, acetate and the ketone bodies acetoacetate and beta-hydroxybutyrate, and thus contributes to the maintenance of intracellular pH. The transport direction is determined by the proton motive force and the concentration gradient of the substrate monocarboxylate. MCT1 is a major lactate exporter. Plays a role in cellular responses to a high-fat diet by modulating the cellular levels of lactate and pyruvate that contribute to the regulation of central metabolic pathways and insulin secretion, with concomitant effects on plasma insulin levels and blood glucose homeostasis. Facilitates the protonated monocarboxylate form of succinate export, that its transient protonation upon muscle cell acidification in exercising muscle and ischemic heart. Functions via alternate outward- and inward-open conformation states. Protonation and deprotonation of 302-Asp is essential for the conformational transition. The sequence is that of Monocarboxylate transporter 1 (Slc16a1) from Mus musculus (Mouse).